Here is a 381-residue protein sequence, read N- to C-terminus: Selenoprotein P (381 aa).

Residues 1-19 (MWRSLGLALALCLLPLGGT) form the signal peptide. Residue N46 is glycosylated (N-linked (GlcNAc...) asparagine). U59 is a non-standard amino acid (selenocysteine). Residues N83, N119, and N128 are each glycosylated (N-linked (GlcNAc...) asparagine). The tract at residues 202–268 (SPHYHHEHHH…ENRDMPGSED (67 aa)) is disordered. The segment covering 204 to 217 (HYHHEHHHNHRHQH) has biased composition (basic residues). The segment covering 218-229 (LGSSELSENQQP) has biased composition (polar residues). Residues 243 to 255 (LHHHHKHKGQHRQ) are compositionally biased toward basic residues. S266 is subject to Phosphoserine. 2 non-standard amino acids (selenocysteine) are found at residues U318 and U330. N338 carries N-linked (GlcNAc...) asparagine glycosylation. 6 non-standard amino acids (selenocysteine) are found at residues U345, U352, U367, U369, U376, and U378. Positions 352–381 (UQISQQLIPTEASTSURUKNQAKKUEUPSN) are disordered. A compositionally biased stretch (polar residues) spans 353–369 (QISQQLIPTEASTSURU).

It belongs to the selenoprotein P family. Post-translationally, phosphorylation sites are present in the extracellular medium.

It localises to the secreted. Might be responsible for some of the extracellular antioxidant defense properties of selenium or might be involved in the transport of selenium. May supply selenium to tissues such as brain and testis. The sequence is that of Selenoprotein P from Pongo abelii (Sumatran orangutan).